The sequence spans 148 residues: SUMO-conjugating enzyme UBC9 (148 aa).

The UBC core domain occupies 1–147; the sequence is MASKRILKEL…ARTWTQKYAM (147 aa). The active-site Glycyl thioester intermediate is Cys85.

It belongs to the ubiquitin-conjugating enzyme family. Interacts with CHIP. In terms of tissue distribution, highest expression in young stems and old leaves. Lowest levels in floral buds, anthers and young leaves.

The protein operates within protein modification; protein sumoylation. Accepts the ubiquitin-like protein SUMO/SMT3 from the E1 complex and catalyzes its covalent attachment to other proteins. Mediates the selective degradation of short-lived and abnormal proteins. The protein is SUMO-conjugating enzyme UBC9 (UBC9) of Arabidopsis thaliana (Mouse-ear cress).